Here is a 78-residue protein sequence, read N- to C-terminus: Beta-defensin 105A (78 aa).

Positions 1-27 (MALIRKTFYFVFAVFFILVQQPSGCQA) are cleaved as a signal peptide. Disulfide bonds link cysteine 43/cysteine 74, cysteine 53/cysteine 67, and cysteine 57/cysteine 73.

It belongs to the beta-defensin family.

The protein resides in the secreted. Has antimicrobial activity. The protein is Beta-defensin 105A (DEFB105A) of Macaca fascicularis (Crab-eating macaque).